Reading from the N-terminus, the 401-residue chain is Formate-dependent phosphoribosylglycinamide formyltransferase (401 aa).

Residues 22–23 and glutamate 82 contribute to the N(1)-(5-phospho-beta-D-ribosyl)glycinamide site; that span reads EL. ATP-binding positions include arginine 115, lysine 157, 162–167, 197–200, and glutamate 205; these read SSGKGQ and EGFI. The ATP-grasp domain occupies 120–315; sequence RLAAESLGLP…EFELHARAIL (196 aa). The Mg(2+) site is built by glutamate 274 and glutamate 286. N(1)-(5-phospho-beta-D-ribosyl)glycinamide-binding positions include aspartate 293, lysine 362, and 369-370; that span reads RR.

This sequence belongs to the PurK/PurT family. As to quaternary structure, homodimer.

It carries out the reaction N(1)-(5-phospho-beta-D-ribosyl)glycinamide + formate + ATP = N(2)-formyl-N(1)-(5-phospho-beta-D-ribosyl)glycinamide + ADP + phosphate + H(+). Its pathway is purine metabolism; IMP biosynthesis via de novo pathway; N(2)-formyl-N(1)-(5-phospho-D-ribosyl)glycinamide from N(1)-(5-phospho-D-ribosyl)glycinamide (formate route): step 1/1. Its function is as follows. Involved in the de novo purine biosynthesis. Catalyzes the transfer of formate to 5-phospho-ribosyl-glycinamide (GAR), producing 5-phospho-ribosyl-N-formylglycinamide (FGAR). Formate is provided by PurU via hydrolysis of 10-formyl-tetrahydrofolate. The sequence is that of Formate-dependent phosphoribosylglycinamide formyltransferase from Cupriavidus taiwanensis (strain DSM 17343 / BCRC 17206 / CCUG 44338 / CIP 107171 / LMG 19424 / R1) (Ralstonia taiwanensis (strain LMG 19424)).